We begin with the raw amino-acid sequence, 51 residues long: DNA-directed RNA polymerase subunit Rpo12 (51 aa).

Zn(2+) contacts are provided by Cys-14, Cys-29, and Cys-32.

This sequence belongs to the archaeal Rpo12/eukaryotic RPC10 RNA polymerase subunit family. As to quaternary structure, part of the RNA polymerase complex. Zn(2+) is required as a cofactor.

The protein resides in the cytoplasm. It carries out the reaction RNA(n) + a ribonucleoside 5'-triphosphate = RNA(n+1) + diphosphate. In terms of biological role, DNA-dependent RNA polymerase (RNAP) catalyzes the transcription of DNA into RNA using the four ribonucleoside triphosphates as substrates. This Methanopyrus kandleri (strain AV19 / DSM 6324 / JCM 9639 / NBRC 100938) protein is DNA-directed RNA polymerase subunit Rpo12.